A 138-amino-acid polypeptide reads, in one-letter code: Phospholipase A2 homolog 1 (138 aa).

The first 16 residues, 1–16, serve as a signal peptide directing secretion; the sequence is MRTLWIMAVLLVGVEG. Intrachain disulfides connect Cys42-Cys132, Cys44-Cys60, Cys59-Cys111, Cys65-Cys138, Cys66-Cys104, Cys73-Cys97, and Cys91-Cys102. An important for membrane-damaging activities in eukaryotes and bacteria; heparin-binding region spans residues 121 to 134; sequence KKYKNNYLKPFCKK.

The protein belongs to the phospholipase A2 family. Group II subfamily. K49 sub-subfamily. As to quaternary structure, homodimer; non-covalently linked (probable alternative/compact dimer conformation in solution). In terms of tissue distribution, expressed by the venom gland.

It is found in the secreted. In terms of biological role, snake venom phospholipase A2 homolog that lacks enzymatic and anticoagulant activities. In mice, it induces conspicuous local myonecrosis, edema, and a systemic interleukin-6 response. In vitro, it is cytolytic upon myoblasts, and weakly bactericidal. A model of myotoxic mechanism has been proposed: an apo Lys49-PLA2 is activated by the entrance of a hydrophobic molecule (e.g. fatty acid) at the hydrophobic channel of the protein leading to a reorientation of a monomer. This reorientation causes a transition between 'inactive' to 'active' states, causing alignment of C-terminal and membrane-docking sites (MDoS) side-by-side and putting the membrane-disruption sites (MDiS) in the same plane, exposed to solvent and in a symmetric position for both monomers. The MDoS region stabilizes the toxin on membrane by the interaction of charged residues with phospholipid head groups. Subsequently, the MDiS region destabilizes the membrane with penetration of hydrophobic residues. This insertion causes a disorganization of the membrane, allowing an uncontrolled influx of ions (i.e. calcium and sodium), and eventually triggering irreversible intracellular alterations and cell death. The protein is Phospholipase A2 homolog 1 of Bothrops atrox (Barba amarilla).